Consider the following 344-residue polypeptide: Type II methyltransferase M.FnuDI (344 aa).

An SAM-dependent MTase C5-type domain is found at Met1 to Lys330. Cys71 is an active-site residue.

It belongs to the class I-like SAM-binding methyltransferase superfamily. C5-methyltransferase family.

The enzyme catalyses a 2'-deoxycytidine in DNA + S-adenosyl-L-methionine = a 5-methyl-2'-deoxycytidine in DNA + S-adenosyl-L-homocysteine + H(+). A methylase, recognizes the double-stranded sequence 5'-GGCC-3', methylates C-? on both strands, and protects the DNA from cleavage by the FnuDI endonuclease. This is Type II methyltransferase M.FnuDI (fnuDIM) from Fusobacterium nucleatum.